The chain runs to 196 residues: uncharacterized protein (196 aa).

This sequence to H.influenzae HI_0431.

This is an uncharacterized protein from Escherichia coli (strain K12).